The chain runs to 340 residues: Phosphate acyltransferase (340 aa).

Belongs to the PlsX family. Homodimer. Probably interacts with PlsY.

The protein resides in the cytoplasm. The enzyme catalyses a fatty acyl-[ACP] + phosphate = an acyl phosphate + holo-[ACP]. It functions in the pathway lipid metabolism; phospholipid metabolism. In terms of biological role, catalyzes the reversible formation of acyl-phosphate (acyl-PO(4)) from acyl-[acyl-carrier-protein] (acyl-ACP). This enzyme utilizes acyl-ACP as fatty acyl donor, but not acyl-CoA. The chain is Phosphate acyltransferase from Nostoc punctiforme (strain ATCC 29133 / PCC 73102).